A 134-amino-acid polypeptide reads, in one-letter code: Protein LctB (134 aa).

This chain is Protein LctB (lctB), found in Bacillus caldotenax.